Consider the following 260-residue polypeptide: Pyridoxine 5'-phosphate synthase (260 aa).

Residue Asn15 coordinates 3-amino-2-oxopropyl phosphate. Position 17 to 18 (17 to 18 (DH)) interacts with 1-deoxy-D-xylulose 5-phosphate. Residue Arg26 participates in 3-amino-2-oxopropyl phosphate binding. Residue His51 is the Proton acceptor of the active site. Positions 53 and 58 each coordinate 1-deoxy-D-xylulose 5-phosphate. The Proton acceptor role is filled by Glu78. Thr108 is a binding site for 1-deoxy-D-xylulose 5-phosphate. Catalysis depends on His199, which acts as the Proton donor. 3-amino-2-oxopropyl phosphate-binding positions include Gly200 and 221 to 222 (GH).

This sequence belongs to the PNP synthase family. In terms of assembly, homooctamer; tetramer of dimers.

It is found in the cytoplasm. The catalysed reaction is 3-amino-2-oxopropyl phosphate + 1-deoxy-D-xylulose 5-phosphate = pyridoxine 5'-phosphate + phosphate + 2 H2O + H(+). It participates in cofactor biosynthesis; pyridoxine 5'-phosphate biosynthesis; pyridoxine 5'-phosphate from D-erythrose 4-phosphate: step 5/5. Functionally, catalyzes the complicated ring closure reaction between the two acyclic compounds 1-deoxy-D-xylulose-5-phosphate (DXP) and 3-amino-2-oxopropyl phosphate (1-amino-acetone-3-phosphate or AAP) to form pyridoxine 5'-phosphate (PNP) and inorganic phosphate. This chain is Pyridoxine 5'-phosphate synthase, found in Cupriavidus taiwanensis (strain DSM 17343 / BCRC 17206 / CCUG 44338 / CIP 107171 / LMG 19424 / R1) (Ralstonia taiwanensis (strain LMG 19424)).